Reading from the N-terminus, the 461-residue chain is Putative aldehyde dehydrogenase FUS7 (461 aa).

Residue 220-225 (GSTATG) coordinates NAD(+). Catalysis depends on residues E242 and C276.

The protein belongs to the aldehyde dehydrogenase family.

The catalysed reaction is an aldehyde + NAD(+) + H2O = a carboxylate + NADH + 2 H(+). In terms of biological role, putative aldehyde dehydrogenase; part of the gene cluster that mediates the biosynthesis of the mycotoxin fusarin C. Within the cluster, FUS1, FUS2, FUS8 and FUS9 are sufficient for fusarin production. The other FUS cluster members are not essential for fusarin C biosynthesis. This Gibberella moniliformis (strain M3125 / FGSC 7600) (Maize ear and stalk rot fungus) protein is Putative aldehyde dehydrogenase FUS7.